The sequence spans 603 residues: Probable methyltransferase-like protein 25 (603 aa).

A disordered region spans residues 326–352; that stretch reads TSSQQIPNRETSEANKERRKMTSKSSE.

In terms of biological role, probable methyltransferase. The polypeptide is Probable methyltransferase-like protein 25 (METTL25) (Homo sapiens (Human)).